We begin with the raw amino-acid sequence, 518 residues long: Sensor protein kinase HptS (518 aa).

Transmembrane regions (helical) follow at residues 20–40 and 222–242; these read IFPV…IYIW and GITL…FGFI. Residues 297 to 513 form the Histidine kinase domain; sequence EQLIHSIEHT…LICYKIPLSR (217 aa). His325 is subject to Phosphohistidine; by autocatalysis.

In terms of processing, autophosphorylated.

It localises to the cell membrane. The catalysed reaction is ATP + protein L-histidine = ADP + protein N-phospho-L-histidine.. Functionally, member of the two-component regulatory system HptS/HptR that regulates genes involved in hexose phosphate transport system in response to changes in extracellular phosphate sources. May act as a sensor protein kinase which is autophosphorylated at a histidine residue and transfers its phosphate group to the conserved aspartic acid residue in the regulatory domain of HptS. In turn, HptS antagonizes CcpA-dependent transcription of a subset of CcpA-regulated genes involved in antibiotic susceptibility. This chain is Sensor protein kinase HptS (hptS), found in Staphylococcus aureus (strain USA300).